The chain runs to 64 residues: Large ribosomal subunit protein bL35 (64 aa).

Residues 27–47 are disordered; it reads MNGSHNLEKKNRKRSRRLHQA. The span at 36 to 45 shows a compositional bias: basic residues; sequence KNRKRSRRLH.

This sequence belongs to the bacterial ribosomal protein bL35 family.

The sequence is that of Large ribosomal subunit protein bL35 from Chlorobium phaeobacteroides (strain DSM 266 / SMG 266 / 2430).